We begin with the raw amino-acid sequence, 127 residues long: Aspartate 1-decarboxylase (127 aa).

The Schiff-base intermediate with substrate; via pyruvic acid role is filled by Ser25. Ser25 is subject to Pyruvic acid (Ser). Thr57 contributes to the substrate binding site. Tyr58 serves as the catalytic Proton donor. 73-75 (GSA) is a binding site for substrate.

The protein belongs to the PanD family. In terms of assembly, heterooctamer of four alpha and four beta subunits. Pyruvate is required as a cofactor. Is synthesized initially as an inactive proenzyme, which is activated by self-cleavage at a specific serine bond to produce a beta-subunit with a hydroxyl group at its C-terminus and an alpha-subunit with a pyruvoyl group at its N-terminus.

The protein localises to the cytoplasm. The catalysed reaction is L-aspartate + H(+) = beta-alanine + CO2. It functions in the pathway cofactor biosynthesis; (R)-pantothenate biosynthesis; beta-alanine from L-aspartate: step 1/1. Catalyzes the pyruvoyl-dependent decarboxylation of aspartate to produce beta-alanine. This Laribacter hongkongensis (strain HLHK9) protein is Aspartate 1-decarboxylase.